Here is an 84-residue protein sequence, read N- to C-terminus: Toxin Aah4 (84 aa).

Residues 1–19 form the signal peptide; sequence MNYLIMFSLALLLVIGVES. The LCN-type CS-alpha/beta domain occupies 21 to 82; it reads RDGYIVDSKN…PIKDPSDDCH (62 aa). Cystine bridges form between cysteine 31–cysteine 81, cysteine 35–cysteine 53, cysteine 39–cysteine 63, and cysteine 43–cysteine 65. Arginine 84 is a propeptide (removed by a carboxypeptidase).

It belongs to the long (4 C-C) scorpion toxin superfamily. Sodium channel inhibitor family. Alpha subfamily. Expressed by the venom gland.

The protein localises to the secreted. In terms of biological role, alpha toxins bind voltage-independently at site-3 of sodium channels (Nav) and inhibit the inactivation of the activated channels, thereby blocking neuronal transmission. This toxin seems to specifically act on Nav1.6/SCN8A sodium channel. In vitro, it inhibits the proliferation of the prostate cancer cell line DU145 (IC(50)=15 uM). It shows low effect on the adhesion of DU145 cells to fibronectin (at 15 uM) and is inactive on DU145 cells migration. The chain is Toxin Aah4 from Androctonus australis (Sahara scorpion).